A 236-amino-acid polypeptide reads, in one-letter code: Phosphoribosylaminoimidazole-succinocarboxamide synthase (236 aa).

The protein belongs to the SAICAR synthetase family.

It carries out the reaction 5-amino-1-(5-phospho-D-ribosyl)imidazole-4-carboxylate + L-aspartate + ATP = (2S)-2-[5-amino-1-(5-phospho-beta-D-ribosyl)imidazole-4-carboxamido]succinate + ADP + phosphate + 2 H(+). It functions in the pathway purine metabolism; IMP biosynthesis via de novo pathway; 5-amino-1-(5-phospho-D-ribosyl)imidazole-4-carboxamide from 5-amino-1-(5-phospho-D-ribosyl)imidazole-4-carboxylate: step 1/2. The sequence is that of Phosphoribosylaminoimidazole-succinocarboxamide synthase from Coprothermobacter proteolyticus (strain ATCC 35245 / DSM 5265 / OCM 4 / BT).